The following is an 89-amino-acid chain: Small ribosomal subunit protein uS15 (89 aa).

It belongs to the universal ribosomal protein uS15 family. Part of the 30S ribosomal subunit. Forms a bridge to the 50S subunit in the 70S ribosome, contacting the 23S rRNA.

Its function is as follows. One of the primary rRNA binding proteins, it binds directly to 16S rRNA where it helps nucleate assembly of the platform of the 30S subunit by binding and bridging several RNA helices of the 16S rRNA. Functionally, forms an intersubunit bridge (bridge B4) with the 23S rRNA of the 50S subunit in the ribosome. In Shewanella sp. (strain ANA-3), this protein is Small ribosomal subunit protein uS15.